The chain runs to 103 residues: NADH-quinone oxidoreductase subunit K (103 aa).

3 helical membrane-spanning segments follow: residues 6–26 (LAHYLVLGAVLFAISIVGIFL), 32–52 (IVLLMAIELMLLAVNLNFVAF), and 63–83 (VFVFFILTVAAAESAIGLAIL).

The protein belongs to the complex I subunit 4L family. NDH-1 is composed of 14 different subunits. Subunits NuoA, H, J, K, L, M, N constitute the membrane sector of the complex.

Its subcellular location is the cell inner membrane. The enzyme catalyses a quinone + NADH + 5 H(+)(in) = a quinol + NAD(+) + 4 H(+)(out). Its function is as follows. NDH-1 shuttles electrons from NADH, via FMN and iron-sulfur (Fe-S) centers, to quinones in the respiratory chain. The immediate electron acceptor for the enzyme in this species is believed to be ubiquinone. Couples the redox reaction to proton translocation (for every two electrons transferred, four hydrogen ions are translocated across the cytoplasmic membrane), and thus conserves the redox energy in a proton gradient. The protein is NADH-quinone oxidoreductase subunit K of Ralstonia pickettii (strain 12D).